The chain runs to 715 residues: Probable GTP diphosphokinase RSH3, chloroplastic (715 aa).

Residues 1-64 constitute a chloroplast transit peptide; the sequence is MVVATTIALY…LLFSGASVKS (64 aa). A compositionally biased stretch (low complexity) spans 65–74; it reads SSSSSSSHPS. The disordered stretch occupies residues 65–84; the sequence is SSSSSSSHPSVGEELASIRH. An HD domain is found at 237 to 341; sequence YLQHCVETAM…IKLADRLHNM (105 aa).

It belongs to the RelA/SpoT family. Expressed in roots, hypocotyls, shoots, cotyledons, rosette and cauline leaves, stems, petals, sepals, stamens, pistils and siliques.

The protein resides in the plastid. It is found in the chloroplast. The catalysed reaction is GTP + ATP = guanosine 3'-diphosphate 5'-triphosphate + AMP. Possesses ppGpp (guanosine 3'-diphosphate 5'-diphosphate) synthetase activity in vitro and is able to functionally complement E.coli relA mutants. May be involved in a rapid plant ppGpp-mediated response to pathogens and other stresses. The protein is Probable GTP diphosphokinase RSH3, chloroplastic (RSH3) of Arabidopsis thaliana (Mouse-ear cress).